The sequence spans 242 residues: C-reactive protein 1.1 (242 aa).

An N-terminal signal peptide occupies residues 1–24 (MKTFHGPTCGTAVSLCLLLFLTSA). Positions 30–241 (ITSKVKFPPS…GVVLSPNEIC (212 aa)) constitute a Pentraxin (PTX) domain. 2 residues coordinate phosphocholine: T60 and Y63. Disulfide bonds link C62–C125 and C112–C144. Residues D85 and N86 each coordinate Ca(2+). N147 is a glycosylation site (N-linked (GlcNAc...) asparagine). Residues Q169, D170, and Q180 each contribute to the Ca(2+) site. A disulfide bridge connects residues C207 and C241.

The protein belongs to the pentraxin family. As to quaternary structure, homopentamer. Pentraxin (or pentaxin) have a discoid arrangement of 5 non-covalently bound subunits. The cofactor is Ca(2+).

Its subcellular location is the secreted. In terms of biological role, might serve the role of immunoglobulins. This Limulus polyphemus (Atlantic horseshoe crab) protein is C-reactive protein 1.1.